The sequence spans 556 residues: Formate--tetrahydrofolate ligase (556 aa).

Residue 65–72 (TPAGEGKT) coordinates ATP.

This sequence belongs to the formate--tetrahydrofolate ligase family.

The catalysed reaction is (6S)-5,6,7,8-tetrahydrofolate + formate + ATP = (6R)-10-formyltetrahydrofolate + ADP + phosphate. Its pathway is one-carbon metabolism; tetrahydrofolate interconversion. The chain is Formate--tetrahydrofolate ligase from Symbiobacterium thermophilum (strain DSM 24528 / JCM 14929 / IAM 14863 / T).